We begin with the raw amino-acid sequence, 352 residues long: Protein RecA (352 aa).

68–75 (GPESSGKT) is a binding site for ATP.

The protein belongs to the RecA family.

Its subcellular location is the cytoplasm. Functionally, can catalyze the hydrolysis of ATP in the presence of single-stranded DNA, the ATP-dependent uptake of single-stranded DNA by duplex DNA, and the ATP-dependent hybridization of homologous single-stranded DNAs. It interacts with LexA causing its activation and leading to its autocatalytic cleavage. This chain is Protein RecA, found in Clostridium perfringens (strain SM101 / Type A).